We begin with the raw amino-acid sequence, 197 residues long: Holliday junction branch migration complex subunit RuvA (197 aa).

The domain I stretch occupies residues 1–64 (MYEYIKGKYI…EDFIGVYGFL (64 aa)). Residues 65 to 144 (TKDELSMFKL…DILEEDDEQI (80 aa)) are domain II. A flexible linker region spans residues 145–149 (INKVT). The domain III stretch occupies residues 149 to 197 (TDDKKVLEAVAALVTLGYSEKEANKVINSCDKNNSLEQIIKEALKYLMK).

It belongs to the RuvA family. As to quaternary structure, homotetramer. Forms an RuvA(8)-RuvB(12)-Holliday junction (HJ) complex. HJ DNA is sandwiched between 2 RuvA tetramers; dsDNA enters through RuvA and exits via RuvB. An RuvB hexamer assembles on each DNA strand where it exits the tetramer. Each RuvB hexamer is contacted by two RuvA subunits (via domain III) on 2 adjacent RuvB subunits; this complex drives branch migration. In the full resolvosome a probable DNA-RuvA(4)-RuvB(12)-RuvC(2) complex forms which resolves the HJ.

It localises to the cytoplasm. Its function is as follows. The RuvA-RuvB-RuvC complex processes Holliday junction (HJ) DNA during genetic recombination and DNA repair, while the RuvA-RuvB complex plays an important role in the rescue of blocked DNA replication forks via replication fork reversal (RFR). RuvA specifically binds to HJ cruciform DNA, conferring on it an open structure. The RuvB hexamer acts as an ATP-dependent pump, pulling dsDNA into and through the RuvAB complex. HJ branch migration allows RuvC to scan DNA until it finds its consensus sequence, where it cleaves and resolves the cruciform DNA. The polypeptide is Holliday junction branch migration complex subunit RuvA (Clostridium botulinum (strain Kyoto / Type A2)).